The chain runs to 20 residues: Cytochrome P450 3A5 (20 aa).

Belongs to the cytochrome P450 family. Requires heme as cofactor.

The protein resides in the endoplasmic reticulum membrane. Its subcellular location is the microsome membrane. The enzyme catalyses an organic molecule + reduced [NADPH--hemoprotein reductase] + O2 = an alcohol + oxidized [NADPH--hemoprotein reductase] + H2O + H(+). Functionally, 6-beta-testosterone hydroxylase. This Papio sp. (Baboon) protein is Cytochrome P450 3A5.